The chain runs to 20 residues: Juvenile hormone-binding protein (20 aa).

Its subcellular location is the secreted. In terms of biological role, prevents juvenile hormone from being hydrolyzed by general esterases by combining with it specifically. In Bombyx mori (Silk moth), this protein is Juvenile hormone-binding protein (JHBP).